Consider the following 188-residue polypeptide: MATYSSNDFRAGLKIMMDGEPYAVESSEFVKPGKGQAFARVKLRRLLTGSRVEKTFKSTDSAEGADVVDMNLTYLYNDGEFWHFMNNETFEQLAADAKAVGDNAKWLLDQAECIVTLWNGQPISVTPPNFVELEIVDTDPGLKGDTAGTGGKPATLSTGAVVKVPLFVQIGEVIKVDTRSGEYVSRVK.

K34 bears the N6-(3,6-diaminohexanoyl)-5-hydroxylysine mark.

This sequence belongs to the elongation factor P family. In terms of processing, may be beta-lysylated on the epsilon-amino group of Lys-34 by the combined action of EpmA and EpmB, and then hydroxylated on the C5 position of the same residue by EpmC (if this protein is present). Lysylation is critical for the stimulatory effect of EF-P on peptide-bond formation. The lysylation moiety may extend toward the peptidyltransferase center and stabilize the terminal 3-CCA end of the tRNA. Hydroxylation of the C5 position on Lys-34 may allow additional potential stabilizing hydrogen-bond interactions with the P-tRNA.

The protein resides in the cytoplasm. The protein operates within protein biosynthesis; polypeptide chain elongation. Its function is as follows. Involved in peptide bond synthesis. Alleviates ribosome stalling that occurs when 3 or more consecutive Pro residues or the sequence PPG is present in a protein, possibly by augmenting the peptidyl transferase activity of the ribosome. Modification of Lys-34 is required for alleviation. This is Elongation factor P from Cronobacter sakazakii (strain ATCC BAA-894) (Enterobacter sakazakii).